A 390-amino-acid polypeptide reads, in one-letter code: Isotocin receptor (390 aa).

The Extracellular portion of the chain corresponds to 1 to 48 (MEEMFKEQDFWSFNESSRNSTVGNETFGGNQTVNPLKRNEEVAKVEVT). N-linked (GlcNAc...) asparagine glycans are attached at residues asparagine 14, asparagine 19, asparagine 24, and asparagine 30. The chain crosses the membrane as a helical span at residues 49 to 69 (VLALVLFLALAGNLCVLIAIY). Residues 70–86 (TAKHTQSRMYYLMKHLS) lie on the Cytoplasmic side of the membrane. The helical transmembrane segment at 87 to 107 (IADLVVAVFQVLPQLIWDITF) threads the bilayer. At 108–124 (RFYGPDFLCRLVKYLQT) the chain is on the extracellular side. The cysteines at positions 116 and 191 are disulfide-linked. A helical membrane pass occupies residues 125-145 (VGMFASTYMLVLMSIDRCIAI). The Cytoplasmic portion of the chain corresponds to 146 to 160 (CQPLRSLHKRKDRCY). The chain crosses the membrane as a helical span at residues 161–181 (VIVSWALSLVFSVPQVYIFSL). Topologically, residues 182 to 206 (REIGNGVYDCWGDFVQPWGAKAYIT) are extracellular. Residues 207-227 (WISLTIYIIPVAILGGCYGLI) form a helical membrane-spanning segment. Residues 228 to 276 (SFKIWQNFKRKTKKDQCITLTTAASKANALARVSSVKLVSKAKITTVKM) are Cytoplasmic-facing. A helical transmembrane segment spans residues 277–297 (TFVIVLAYIVCWTPFFFVQMW). The Extracellular segment spans residues 298–311 (SAWDPEAPREAMPF). Residues 312 to 332 (IISMLLASLNSCCNPWIYMFF) form a helical membrane-spanning segment. Residues 333–390 (AGHLFHDLKQSLLCCSTLYLKSSQCRCDQEHDSRKSNCSTYVIKSTSSQRSITQSSIT) are Cytoplasmic-facing.

It belongs to the G-protein coupled receptor 1 family. Vasopressin/oxytocin receptor subfamily. In terms of tissue distribution, expressed in brain, intestine, bladder, skeletal muscle, lateral line, gills and kidney.

The protein resides in the cell membrane. Functionally, binds to isotocin. Can also be activated by vasotocin, mesotocin, oxytocin and Arg-vasopressin, although these have lower potencies than isotocin. Produces an induction of membrane chloride currents indicating that it is coupled to the inositol phosphate/calcium pathway. The protein is Isotocin receptor of Catostomus commersonii (White sucker).